Consider the following 792-residue polypeptide: uncharacterized protein (792 aa).

25 tandem repeats follow at residues 91 to 102 (NSSTNATTTASI), 103 to 114 (NVRTSATTTASI), 115 to 126 (NVRTSATTTEST), 127 to 138 (NSNTNATTTEST), 139 to 150 (NSSTNATTTASI), 151 to 162 (NVRTSATTTEST), 163 to 174 (NSSTNATTTASI), 175 to 186 (NVRTSATTTEST), 187 to 198 (NSSTNATTTASI), 199 to 210 (NVRTSATTTEST), 211 to 222 (NSNTNASTNATT), 223 to 234 (NSSTNATTTAST), 235 to 246 (NVRTSATTNATT), 247 to 258 (NSSTNATTTAST), 259 to 270 (NVRTSATTTAST), 271 to 282 (NVRTSATTTASI), 283 to 294 (NVRTSATTTESI), 295 to 306 (NSSTNATTTEST), 307 to 318 (NSNTSATTTEST), 319 to 330 (DSNTNATTTASI), 331 to 342 (NVRTSATTTEST), 343 to 354 (NSNTSATTTEST), 355 to 366 (DSNTSATTTAST), 367 to 378 (NSSTNATTTAST), and 379 to 390 (NSSTNATTTEST). The 25 X 12 AA tandem repeat of N-[SV]-[RS]-T-[NS]-A-T-T-T-[AE]-[ST]-[IT] stretch occupies residues 91–390 (NSSTNATTTA…STNATTTEST (300 aa)). Residues 113–417 (SINVRTSATT…RFHPVTDINK (305 aa)) are disordered. Positions 118–393 (TSATTTESTN…ATTTESTNAS (276 aa)) are enriched in low complexity. The segment covering 394-417 (AKEDANKDGNAEDNRFHPVTDINK) has biased composition (basic and acidic residues).

This is an uncharacterized protein from Saccharomyces cerevisiae (strain ATCC 204508 / S288c) (Baker's yeast).